A 91-amino-acid chain; its full sequence is PqqA binding protein (91 aa).

It belongs to the PqqD family. Monomer. Interacts with PqqE.

It functions in the pathway cofactor biosynthesis; pyrroloquinoline quinone biosynthesis. Functionally, functions as a PqqA binding protein and presents PqqA to PqqE, in the pyrroloquinoline quinone (PQQ) biosynthetic pathway. The polypeptide is PqqA binding protein (Pseudomonas fluorescens (strain SBW25)).